A 244-amino-acid polypeptide reads, in one-letter code: Type III pantothenate kinase (244 aa).

11 to 18 (DAGNTSIK) provides a ligand contact to ATP. Substrate-binding positions include Tyr-90 and 97-100 (GIDR). Asp-99 (proton acceptor) is an active-site residue. Residue Asp-119 participates in K(+) binding. Position 122 (Thr-122) interacts with ATP. Position 175 (Thr-175) interacts with substrate.

The protein belongs to the type III pantothenate kinase family. Homodimer. The cofactor is NH4(+). Requires K(+) as cofactor.

The protein localises to the cytoplasm. It carries out the reaction (R)-pantothenate + ATP = (R)-4'-phosphopantothenate + ADP + H(+). It participates in cofactor biosynthesis; coenzyme A biosynthesis; CoA from (R)-pantothenate: step 1/5. In terms of biological role, catalyzes the phosphorylation of pantothenate (Pan), the first step in CoA biosynthesis. This is Type III pantothenate kinase from Marinomonas sp. (strain MWYL1).